An 874-amino-acid polypeptide reads, in one-letter code: Rho GTPase-activating protein 42 (874 aa).

One can recognise a BAR domain in the interval 7–262; the sequence is EFSDSYLDSP…MKSANQDYRP (256 aa). The stretch at 225–261 forms a coiled coil; it reads KQQLQFNLQNTRNNFESTRQEVERLMQRMKSANQDYR. Residues 265–374 form the PH domain; sequence QWTMEGYLYV…WLEAMDGKEP (110 aa). Tyr-376 carries the post-translational modification Phosphotyrosine. The 197-residue stretch at 376-572 folds into the Rho-GAP domain; that stretch reads YTLPAIISKK…ILIEHYEKIF (197 aa). Residues 575-720 are disordered; the sequence is APDPSIPLPQ…GDVSPPIDLV (146 aa). A compositionally biased stretch (low complexity) spans 620–650; that stretch reads DSYSSSPDSTPMGSIESLSSHSSEQNSTTKS. The segment covering 667 to 686 has biased composition (polar residues); sequence TPSSSNGQKSLGLWTTSPES. Position 683 is a phosphoserine (Ser-683). Basic and acidic residues predominate over residues 687–697; that stretch reads SSREDATKTDA. Over residues 700 to 711 the composition is skewed to polar residues; that stretch reads DCQSVASVTSPG. 4 positions are modified to phosphoserine: Ser-740, Ser-753, Ser-756, and Ser-811. Over residues 749 to 762 the composition is skewed to polar residues; that stretch reads SYSGSIQSLTSVGS. A disordered region spans residues 749 to 777; sequence SYSGSIQSLTSVGSKETPKASPNPDLPPK. Residues 816 to 874 enclose the SH3 domain; it reads SSGRQAKAMYSCKAEHSHELSFPQGAIFSNVYPSVEPGWLKATYEGKTGLVPENYVVFL. Phosphotyrosine is present on Tyr-870.

Highly and selectively expressed in smooth muscle cells.

Its function is as follows. May influence blood pressure by functioning as a GTPase-activating protein for RHOA in vascular smooth muscle. The sequence is that of Rho GTPase-activating protein 42 from Homo sapiens (Human).